A 985-amino-acid chain; its full sequence is Regulator of telomere elongation helicase 1 homolog (985 aa).

One can recognise a Helicase ATP-binding domain in the interval A7–D303. S42–T49 serves as a coordination point for ATP. Positions 146, 164, 173, and 209 each coordinate [4Fe-4S] cluster. The short motif at D252–H255 is the DEAH box element. The interval V863–T883 is disordered. Residues S872 to V882 show a composition bias toward polar residues. T874 carries the phosphothreonine modification.

This sequence belongs to the helicase family. RAD3/XPD subfamily. Expressed in both male germline and somatic cells (at protein level). Expressed in ovarian germline stem cells (at protein level). Expressed in adult testes (at protein level). Expressed in the germarium including germline stem cells.

The protein localises to the nucleus. Its subcellular location is the chromosome. It catalyses the reaction ATP + H2O = ADP + phosphate + H(+). A probable ATP-dependent DNA helicase implicated in DNA repair and the maintenance of genomic stability. Acts as an anti-recombinase to counteract toxic recombination and limit crossover during meiosis. Regulates meiotic recombination and crossover homeostasis by physically dissociating strand invasion events and thereby promotes noncrossover repair by meiotic synthesis dependent strand annealing (SDSA) as well as disassembly of D loop recombination intermediates. In male germline stem cells (GSCs), plays a role in GSCs maintenance during larval germline development by modulating the expression of genes such as Stat92E and preventing DNA damage-induced checkpoint activation. May play a role in female germline stem cell maintenance. This chain is Regulator of telomere elongation helicase 1 homolog, found in Drosophila melanogaster (Fruit fly).